A 145-amino-acid chain; its full sequence is D-aminoacyl-tRNA deacylase (145 aa).

Positions 137-138 match the Gly-cisPro motif, important for rejection of L-amino acids motif; the sequence is GP.

This sequence belongs to the DTD family. In terms of assembly, homodimer.

The protein localises to the cytoplasm. It catalyses the reaction glycyl-tRNA(Ala) + H2O = tRNA(Ala) + glycine + H(+). The enzyme catalyses a D-aminoacyl-tRNA + H2O = a tRNA + a D-alpha-amino acid + H(+). Its function is as follows. An aminoacyl-tRNA editing enzyme that deacylates mischarged D-aminoacyl-tRNAs. Also deacylates mischarged glycyl-tRNA(Ala), protecting cells against glycine mischarging by AlaRS. Acts via tRNA-based rather than protein-based catalysis; rejects L-amino acids rather than detecting D-amino acids in the active site. By recycling D-aminoacyl-tRNA to D-amino acids and free tRNA molecules, this enzyme counteracts the toxicity associated with the formation of D-aminoacyl-tRNA entities in vivo and helps enforce protein L-homochirality. The chain is D-aminoacyl-tRNA deacylase from Dichelobacter nodosus (strain VCS1703A).